The chain runs to 107 residues: uncharacterized protein (107 aa).

Residues 6 to 107 form the Glutaredoxin domain; sequence KKVIEQILDN…QAQVETLLAA (102 aa). K23 contributes to the glutathione binding site. Position 31 (C31) interacts with [2Fe-2S] cluster. Glutathione is bound by residues R60 and 85–86; that span reads AD.

This sequence belongs to the glutaredoxin family. Monothiol subfamily.

Its subcellular location is the plastid. It is found in the chloroplast. This is an uncharacterized protein from Porphyra purpurea (Red seaweed).